The chain runs to 369 residues: Phospho-N-acetylmuramoyl-pentapeptide-transferase (369 aa).

10 helical membrane-spanning segments follow: residues 2-22 (IALL…TPLF), 55-75 (TVVV…MWMM), 86-106 (ALLL…DDFI), 122-142 (LVLQ…FPNA), 158-178 (IPWL…FVLW), 196-216 (LDGL…LMGI), 239-259 (PLDL…FLWW), 266-286 (IFMG…FAIL), 291-311 (LLLA…IIQV), and 348-368 (ILGG…WVVL).

Belongs to the glycosyltransferase 4 family. MraY subfamily. The cofactor is Mg(2+).

It is found in the cell membrane. The enzyme catalyses UDP-N-acetyl-alpha-D-muramoyl-L-alanyl-gamma-D-glutamyl-meso-2,6-diaminopimeloyl-D-alanyl-D-alanine + di-trans,octa-cis-undecaprenyl phosphate = di-trans,octa-cis-undecaprenyl diphospho-N-acetyl-alpha-D-muramoyl-L-alanyl-D-glutamyl-meso-2,6-diaminopimeloyl-D-alanyl-D-alanine + UMP. The protein operates within cell wall biogenesis; peptidoglycan biosynthesis. Catalyzes the initial step of the lipid cycle reactions in the biosynthesis of the cell wall peptidoglycan: transfers peptidoglycan precursor phospho-MurNAc-pentapeptide from UDP-MurNAc-pentapeptide onto the lipid carrier undecaprenyl phosphate, yielding undecaprenyl-pyrophosphoryl-MurNAc-pentapeptide, known as lipid I. The sequence is that of Phospho-N-acetylmuramoyl-pentapeptide-transferase from Arthrobacter sp. (strain FB24).